Here is a 430-residue protein sequence, read N- to C-terminus: MISKTHTFVILASGHGRRMNSDLPKVLHKIGSFSMLQHVIYNAKQLNPENIAVVVDQPLIERLKCFKDIQLITQELTLGTGDAVKTAMRNLRELPDSSIVVVQYGDTPLIKSSTITKMISYLEGKALVCLGFRTSNKEYGRLIIENGSLREIVEAKSDKNNHEEFLANAGIMVACAKNLRELVEKIECNSSTHEYYLTDIVSIAVKSNLNVGYVITGGEEATGINNRNDLIKAEFYFQENKRKIFTDSGVTLVAPETVFFSLDTQIARDSVIYPYVFFGTGVKIESGAKILPFSHLENCLIKSNAEVGPFTRIRGNTTIGNKAKIGNFVEVKTSEVGQNTRIKHLSYIGNAKVGQESNIGAGTIVCNYDGKNKHETNIGSNCFVGANSSLIAPLNIHDESVIAAGSVIVEDVPEKSLAIAREKQVTKRIK.

Residues 1–227 form a pyrophosphorylase region; the sequence is MISKTHTFVI…GEEATGINNR (227 aa). Residues lysine 25, glutamine 74, 79 to 80, 104 to 106, glycine 140, glutamate 154, asparagine 168, and asparagine 225 each bind UDP-N-acetyl-alpha-D-glucosamine; these read GT and YGD. A Mg(2+)-binding site is contributed by aspartate 106. Residue asparagine 225 coordinates Mg(2+). Residues 228–248 are linker; the sequence is NDLIKAEFYFQENKRKIFTDS. The segment at 249–430 is N-acetyltransferase; the sequence is GVTLVAPETV…REKQVTKRIK (182 aa). 2 residues coordinate UDP-N-acetyl-alpha-D-glucosamine: arginine 314 and lysine 332. Residue histidine 344 is the Proton acceptor of the active site. 2 residues coordinate UDP-N-acetyl-alpha-D-glucosamine: tyrosine 347 and asparagine 358. Acetyl-CoA is bound by residues alanine 361, 367–368, alanine 404, and arginine 421; that span reads NY.

This sequence in the N-terminal section; belongs to the N-acetylglucosamine-1-phosphate uridyltransferase family. In the C-terminal section; belongs to the transferase hexapeptide repeat family. In terms of assembly, homotrimer. Mg(2+) is required as a cofactor.

Its subcellular location is the cytoplasm. The catalysed reaction is alpha-D-glucosamine 1-phosphate + acetyl-CoA = N-acetyl-alpha-D-glucosamine 1-phosphate + CoA + H(+). It catalyses the reaction N-acetyl-alpha-D-glucosamine 1-phosphate + UTP + H(+) = UDP-N-acetyl-alpha-D-glucosamine + diphosphate. The protein operates within nucleotide-sugar biosynthesis; UDP-N-acetyl-alpha-D-glucosamine biosynthesis; N-acetyl-alpha-D-glucosamine 1-phosphate from alpha-D-glucosamine 6-phosphate (route II): step 2/2. It functions in the pathway nucleotide-sugar biosynthesis; UDP-N-acetyl-alpha-D-glucosamine biosynthesis; UDP-N-acetyl-alpha-D-glucosamine from N-acetyl-alpha-D-glucosamine 1-phosphate: step 1/1. Its pathway is bacterial outer membrane biogenesis; LPS lipid A biosynthesis. Functionally, catalyzes the last two sequential reactions in the de novo biosynthetic pathway for UDP-N-acetylglucosamine (UDP-GlcNAc). The C-terminal domain catalyzes the transfer of acetyl group from acetyl coenzyme A to glucosamine-1-phosphate (GlcN-1-P) to produce N-acetylglucosamine-1-phosphate (GlcNAc-1-P), which is converted into UDP-GlcNAc by the transfer of uridine 5-monophosphate (from uridine 5-triphosphate), a reaction catalyzed by the N-terminal domain. In Wolbachia pipientis wMel, this protein is Bifunctional protein GlmU.